Consider the following 190-residue polypeptide: uncharacterized protein (190 aa).

The first 15 residues, 1-15 (MKVFAYIALATVVAG), serve as a signal peptide directing secretion.

It is found in the secreted. This is an uncharacterized protein from Arthroderma benhamiae (strain ATCC MYA-4681 / CBS 112371) (Trichophyton mentagrophytes).